The following is a 96-amino-acid chain: Co-chaperonin GroES (96 aa).

Belongs to the GroES chaperonin family. In terms of assembly, heptamer of 7 subunits arranged in a ring. Interacts with the chaperonin GroEL.

It localises to the cytoplasm. In terms of biological role, together with the chaperonin GroEL, plays an essential role in assisting protein folding. The GroEL-GroES system forms a nano-cage that allows encapsulation of the non-native substrate proteins and provides a physical environment optimized to promote and accelerate protein folding. GroES binds to the apical surface of the GroEL ring, thereby capping the opening of the GroEL channel. The sequence is that of Co-chaperonin GroES from Paracidovorax citrulli (strain AAC00-1) (Acidovorax citrulli).